Reading from the N-terminus, the 314-residue chain is Methionyl-tRNA formyltransferase (314 aa).

Residue 113–116 (SLLP) coordinates (6S)-5,6,7,8-tetrahydrofolate.

This sequence belongs to the Fmt family.

The enzyme catalyses L-methionyl-tRNA(fMet) + (6R)-10-formyltetrahydrofolate = N-formyl-L-methionyl-tRNA(fMet) + (6S)-5,6,7,8-tetrahydrofolate + H(+). Its function is as follows. Attaches a formyl group to the free amino group of methionyl-tRNA(fMet). The formyl group appears to play a dual role in the initiator identity of N-formylmethionyl-tRNA by promoting its recognition by IF2 and preventing the misappropriation of this tRNA by the elongation apparatus. The sequence is that of Methionyl-tRNA formyltransferase from Chlorobaculum tepidum (strain ATCC 49652 / DSM 12025 / NBRC 103806 / TLS) (Chlorobium tepidum).